The primary structure comprises 129 residues: Small ribosomal subunit protein uS11 (129 aa).

Belongs to the universal ribosomal protein uS11 family. In terms of assembly, part of the 30S ribosomal subunit. Interacts with proteins S7 and S18. Binds to IF-3.

Functionally, located on the platform of the 30S subunit, it bridges several disparate RNA helices of the 16S rRNA. Forms part of the Shine-Dalgarno cleft in the 70S ribosome. This chain is Small ribosomal subunit protein uS11, found in Symbiobacterium thermophilum (strain DSM 24528 / JCM 14929 / IAM 14863 / T).